The primary structure comprises 361 residues: D-amino-acid oxidase (361 aa).

A signal peptide spans 1–22 (MSNTIVVVGAGVIGLTSALLLS). 8 residues coordinate FAD: Ala-10, Ile-13, Lys-34, His-35, Ala-45, Ser-46, Gly-50, and Asn-52. Asn-193 and Asn-222 each carry an N-linked (GlcNAc...) asparagine glycan. The (R)-lactate site is built by Tyr-242, Tyr-258, and Arg-305. Anthranilate-binding residues include Tyr-242, Tyr-258, and Arg-305. FAD-binding residues include Arg-305, Ser-332, Gly-335, Tyr-336, and Gln-337. Positions 359-361 (SKL) match the Microbody targeting signal motif.

This sequence belongs to the DAMOX/DASOX family. FAD is required as a cofactor. Post-translationally, the N-terminus is blocked.

It is found in the peroxisome matrix. The catalysed reaction is a D-alpha-amino acid + O2 + H2O = a 2-oxocarboxylate + H2O2 + NH4(+). Catalyzes the oxidative deamination of D-amino acids with broad substrate specificity. Enables the organism to utilize D-amino acids as a source of nutrients. The sequence is that of D-amino-acid oxidase from Fusarium vanettenii (Neocosmospora pisi).